The primary structure comprises 468 residues: Phosphomethylpyrimidine synthase (468 aa).

Substrate-binding positions include Asn82, Met111, Tyr141, His177, 197–199 (SRG), 238–241 (DSLR), and Glu277. His281 lines the Zn(2+) pocket. Tyr304 contributes to the substrate binding site. His345 is a Zn(2+) binding site. Residues Cys425, Cys428, and Cys433 each contribute to the [4Fe-4S] cluster site.

The protein belongs to the ThiC family. [4Fe-4S] cluster serves as cofactor.

It catalyses the reaction 5-amino-1-(5-phospho-beta-D-ribosyl)imidazole + S-adenosyl-L-methionine = 4-amino-2-methyl-5-(phosphooxymethyl)pyrimidine + CO + 5'-deoxyadenosine + formate + L-methionine + 3 H(+). Its pathway is cofactor biosynthesis; thiamine diphosphate biosynthesis. Its function is as follows. Catalyzes the synthesis of the hydroxymethylpyrimidine phosphate (HMP-P) moiety of thiamine from aminoimidazole ribotide (AIR) in a radical S-adenosyl-L-methionine (SAM)-dependent reaction. The chain is Phosphomethylpyrimidine synthase from Prochlorococcus marinus (strain SARG / CCMP1375 / SS120).